A 385-amino-acid polypeptide reads, in one-letter code: Tyrosine--tRNA ligase 1, cytoplasmic (385 aa).

Positions 77–85 (PSGRMHIAQ) match the 'HIGH' region motif. L-tyrosine-binding residues include Tyr200, Gln204, Asp207, and Gln222. The short motif at 259–263 (KMSKS) is the 'KMSKS' region element. Lys262 is an ATP binding site.

It belongs to the class-I aminoacyl-tRNA synthetase family.

The protein resides in the cytoplasm. Its subcellular location is the cytosol. It catalyses the reaction tRNA(Tyr) + L-tyrosine + ATP = L-tyrosyl-tRNA(Tyr) + AMP + diphosphate + H(+). Its function is as follows. Catalyzes the attachment of tyrosine to tRNA(Tyr) in a two-step reaction: tyrosine is first activated by ATP to form Tyr-AMP and then transferred to the acceptor end of tRNA(Tyr). This chain is Tyrosine--tRNA ligase 1, cytoplasmic, found in Arabidopsis thaliana (Mouse-ear cress).